The following is a 418-amino-acid chain: Enolase 1 (418 aa).

Residue glutamine 162 coordinates (2R)-2-phosphoglycerate. Glutamate 204 serves as the catalytic Proton donor. Residues aspartate 241, glutamate 285, and aspartate 312 each coordinate Mg(2+). Positions 337, 366, 367, and 388 each coordinate (2R)-2-phosphoglycerate. The Proton acceptor role is filled by lysine 337.

This sequence belongs to the enolase family. Mg(2+) is required as a cofactor.

Its subcellular location is the cytoplasm. The protein localises to the secreted. It localises to the cell surface. It catalyses the reaction (2R)-2-phosphoglycerate = phosphoenolpyruvate + H2O. Its pathway is carbohydrate degradation; glycolysis; pyruvate from D-glyceraldehyde 3-phosphate: step 4/5. In terms of biological role, catalyzes the reversible conversion of 2-phosphoglycerate (2-PG) into phosphoenolpyruvate (PEP). It is essential for the degradation of carbohydrates via glycolysis. The sequence is that of Enolase 1 from Lactococcus lactis subsp. cremoris (strain SK11).